The primary structure comprises 1368 residues: Mediator of RNA polymerase II transcription subunit 23 (1368 aa).

Positions 1343–1368 are disordered; it reads VPPQAMNSGSPAPQSNQVPVSLPVTQ. Positions 1347–1368 are enriched in polar residues; that stretch reads AMNSGSPAPQSNQVPVSLPVTQ.

It belongs to the Mediator complex subunit 23 family. As to quaternary structure, interacts with ELK1. Component of the Mediator complex, which is composed of MED1, MED4, MED6, MED7, MED8, MED9, MED10, MED11, MED12, MED13, MED13L, MED14, MED15, MED16, MED17, MED18, MED19, MED20, MED21, MED22, MED23, MED24, MED25, MED26, MED27, MED29, MED30, MED31, CCNC, CDK8 and CDC2L6/CDK11. The MED12, MED13, CCNC and CDK8 subunits form a distinct module termed the CDK8 module. Mediator containing the CDK8 module is less active than Mediator lacking this module in supporting transcriptional activation. Individual preparations of the Mediator complex lacking one or more distinct subunits have been variously termed ARC, CRSP, DRIP, PC2, SMCC and TRAP. Interacts with CEBPB (when not methylated), CTNNB1, and GLI3. Interacts with the adenovirus E1A protein.

The protein localises to the nucleus. Its function is as follows. Required for transcriptional activation subsequent to the assembly of the pre-initiation complex. Component of the Mediator complex, a coactivator involved in the regulated transcription of nearly all RNA polymerase II-dependent genes. Mediator functions as a bridge to convey information from gene-specific regulatory proteins to the basal RNA polymerase II transcription machinery. Mediator is recruited to promoters by direct interactions with regulatory proteins and serves as a scaffold for the assembly of a functional pre-initiation complex with RNA polymerase II and the general transcription factors. Required for transcriptional activation by adenovirus E1A protein. Required for ELK1-dependent transcriptional activation in response to activated Ras signaling. The sequence is that of Mediator of RNA polymerase II transcription subunit 23 (MED23) from Homo sapiens (Human).